Here is a 309-residue protein sequence, read N- to C-terminus: UDP-3-O-acyl-N-acetylglucosamine deacetylase (309 aa).

Residues histidine 78, histidine 235, and aspartate 239 each contribute to the Zn(2+) site. Histidine 262 serves as the catalytic Proton donor.

Belongs to the LpxC family. Zn(2+) is required as a cofactor.

The enzyme catalyses a UDP-3-O-[(3R)-3-hydroxyacyl]-N-acetyl-alpha-D-glucosamine + H2O = a UDP-3-O-[(3R)-3-hydroxyacyl]-alpha-D-glucosamine + acetate. Its pathway is glycolipid biosynthesis; lipid IV(A) biosynthesis; lipid IV(A) from (3R)-3-hydroxytetradecanoyl-[acyl-carrier-protein] and UDP-N-acetyl-alpha-D-glucosamine: step 2/6. Its function is as follows. Catalyzes the hydrolysis of UDP-3-O-myristoyl-N-acetylglucosamine to form UDP-3-O-myristoylglucosamine and acetate, the committed step in lipid A biosynthesis. The chain is UDP-3-O-acyl-N-acetylglucosamine deacetylase from Syntrophotalea carbinolica (strain DSM 2380 / NBRC 103641 / GraBd1) (Pelobacter carbinolicus).